The primary structure comprises 469 residues: 24-hydroxycholesterol 7-alpha-hydroxylase (469 aa).

Residues 1–23 (MELISPTVIIILGCLALFLLLQR) form the signal peptide. The next 3 helical transmembrane spans lie at 267 to 287 (GLLL…WTLA), 352 to 372 (VEIL…PFWL), and 412 to 432 (FQCP…ILIL). Position 414 (cysteine 414) interacts with heme.

This sequence belongs to the cytochrome P450 family. Heme serves as cofactor. As to expression, liver specific.

The protein localises to the endoplasmic reticulum membrane. Its subcellular location is the microsome membrane. The catalysed reaction is (24S)-hydroxycholesterol + reduced [NADPH--hemoprotein reductase] + O2 = (24S)-7alpha-dihydroxycholesterol + oxidized [NADPH--hemoprotein reductase] + H2O + H(+). Its pathway is steroid metabolism; cholesterol degradation. The protein operates within lipid metabolism; bile acid biosynthesis. Its function is as follows. A cytochrome P450 monooxygenase involved in neural cholesterol clearance through bile acid synthesis. Catalyzes 7-alpha hydroxylation of (24S)-hydroxycholesterol, a neural oxysterol that is metabolized to bile acids in the liver. Mechanistically, uses molecular oxygen inserting one oxygen atom into a substrate, and reducing the second into a water molecule, with two electrons provided by NADPH via cytochrome P450 reductase (CPR; NADPH-ferrihemoprotein reductase). This is 24-hydroxycholesterol 7-alpha-hydroxylase from Homo sapiens (Human).